A 170-amino-acid chain; its full sequence is ATP synthase subunit b (170 aa).

A helical membrane pass occupies residues 30–50 (FFFVLAIFLVVLAVIGTFVVP).

It belongs to the ATPase B chain family. As to quaternary structure, F-type ATPases have 2 components, F(1) - the catalytic core - and F(0) - the membrane proton channel. F(1) has five subunits: alpha(3), beta(3), gamma(1), delta(1), epsilon(1). F(0) has three main subunits: a(1), b(2) and c(10-14). The alpha and beta chains form an alternating ring which encloses part of the gamma chain. F(1) is attached to F(0) by a central stalk formed by the gamma and epsilon chains, while a peripheral stalk is formed by the delta and b chains.

It localises to the cell membrane. In terms of biological role, f(1)F(0) ATP synthase produces ATP from ADP in the presence of a proton or sodium gradient. F-type ATPases consist of two structural domains, F(1) containing the extramembraneous catalytic core and F(0) containing the membrane proton channel, linked together by a central stalk and a peripheral stalk. During catalysis, ATP synthesis in the catalytic domain of F(1) is coupled via a rotary mechanism of the central stalk subunits to proton translocation. Component of the F(0) channel, it forms part of the peripheral stalk, linking F(1) to F(0). In Mycobacterium ulcerans (strain Agy99), this protein is ATP synthase subunit b.